The following is a 526-amino-acid chain: Fatty-acid amide hydrolase 2-B (526 aa).

Residues 12-32 form a helical membrane-spanning segment; the sequence is CLLVLVSGLFLALFRLLSPGT. Catalysis depends on charge relay system residues lysine 128 and serine 203. Serine 227 serves as the catalytic Acyl-ester intermediate.

It belongs to the amidase family.

The protein resides in the membrane. The catalysed reaction is N-(5Z,8Z,11Z,14Z-eicosatetraenoyl)-ethanolamine + H2O = ethanolamine + (5Z,8Z,11Z,14Z)-eicosatetraenoate. It carries out the reaction (9Z)-octadecenamide + H2O = (9Z)-octadecenoate + NH4(+). The chain is Fatty-acid amide hydrolase 2-B (faah2b) from Danio rerio (Zebrafish).